Reading from the N-terminus, the 305-residue chain is Putative ankyrin repeat protein RF_0580 (305 aa).

ANK repeat units follow at residues 5–34 (YNKNNLFAKLAYGDLSEVQALLKSGVNIDE), 39–68 (RGETALYNTLFTGYMDRAAFLLKHKASPNI), 72–101 (SGQTILYLLVMNNSIDKMKFLFENTTNIDL), 107–136 (CGHSPLHAATFNENIEAMELLLKKGADINS), 140–169 (FGASALHGTIYNNKLKAAELLLNHGADVNA), 173–202 (YEDTILHNIIGTNNIEAAKFLLQNGADVNI), and 206–235 (NNFTPLDRAILGQHKELAELFLKSGATIKI).

In Rickettsia felis (strain ATCC VR-1525 / URRWXCal2) (Rickettsia azadi), this protein is Putative ankyrin repeat protein RF_0580.